Reading from the N-terminus, the 457-residue chain is DNA repair protein RadA (457 aa).

A C4-type zinc finger spans residues 12-29; it reads CQACGYESAKWMGKCPNC. 97–104 is a binding site for ATP; the sequence is GDPGIGKS. A RadA KNRFG motif motif is present at residues 254-258; it reads KNRFG. Residues 353 to 457 are lon-protease-like; that stretch reads DAYLKAAGGV…GEALKKALPD (105 aa).

The protein belongs to the RecA family. RadA subfamily.

Functionally, DNA-dependent ATPase involved in processing of recombination intermediates, plays a role in repairing DNA breaks. Stimulates the branch migration of RecA-mediated strand transfer reactions, allowing the 3' invading strand to extend heteroduplex DNA faster. Binds ssDNA in the presence of ADP but not other nucleotides, has ATPase activity that is stimulated by ssDNA and various branched DNA structures, but inhibited by SSB. Does not have RecA's homology-searching function. The chain is DNA repair protein RadA from Listeria monocytogenes serovar 1/2a (strain ATCC BAA-679 / EGD-e).